The sequence spans 181 residues: Acireductone dioxygenase (181 aa).

The Fe(2+) site is built by His-97, His-99, Glu-103, and His-141. Ni(2+) is bound by residues His-97, His-99, Glu-103, and His-141.

It belongs to the acireductone dioxygenase (ARD) family. As to quaternary structure, monomer. Requires Fe(2+) as cofactor. Ni(2+) serves as cofactor.

It catalyses the reaction 1,2-dihydroxy-5-(methylsulfanyl)pent-1-en-3-one + O2 = 3-(methylsulfanyl)propanoate + CO + formate + 2 H(+). The enzyme catalyses 1,2-dihydroxy-5-(methylsulfanyl)pent-1-en-3-one + O2 = 4-methylsulfanyl-2-oxobutanoate + formate + 2 H(+). Its pathway is amino-acid biosynthesis; L-methionine biosynthesis via salvage pathway; L-methionine from S-methyl-5-thio-alpha-D-ribose 1-phosphate: step 5/6. Functionally, catalyzes 2 different reactions between oxygen and the acireductone 1,2-dihydroxy-3-keto-5-methylthiopentene (DHK-MTPene) depending upon the metal bound in the active site. Fe-containing acireductone dioxygenase (Fe-ARD) produces formate and 2-keto-4-methylthiobutyrate (KMTB), the alpha-ketoacid precursor of methionine in the methionine recycle pathway. Ni-containing acireductone dioxygenase (Ni-ARD) produces methylthiopropionate, carbon monoxide and formate, and does not lie on the methionine recycle pathway. This Pseudomonas fluorescens (strain ATCC BAA-477 / NRRL B-23932 / Pf-5) protein is Acireductone dioxygenase.